The sequence spans 89 residues: Small ribosomal subunit protein uS15 (89 aa).

Belongs to the universal ribosomal protein uS15 family. In terms of assembly, part of the 30S ribosomal subunit. Forms a bridge to the 50S subunit in the 70S ribosome, contacting the 23S rRNA.

Its function is as follows. One of the primary rRNA binding proteins, it binds directly to 16S rRNA where it helps nucleate assembly of the platform of the 30S subunit by binding and bridging several RNA helices of the 16S rRNA. In terms of biological role, forms an intersubunit bridge (bridge B4) with the 23S rRNA of the 50S subunit in the ribosome. This chain is Small ribosomal subunit protein uS15, found in Methylobacterium sp. (strain 4-46).